The chain runs to 93 residues: RNA-binding protein Hfq (93 aa).

The region spanning 9–68 (DPFLNALRKERIPVSIFLVNGIKLQGQIESFDQYVVLLKNAVSQMVYKHAISTVVPARNP) is the Sm domain. A compositionally biased stretch (low complexity) spans 74 to 86 (PAMAAGATAAPAA). The segment at 74–93 (PAMAAGATAAPAADEGYGNQ) is disordered.

The protein belongs to the Hfq family. As to quaternary structure, homohexamer.

RNA chaperone that binds small regulatory RNA (sRNAs) and mRNAs to facilitate mRNA translational regulation in response to envelope stress, environmental stress and changes in metabolite concentrations. Also binds with high specificity to tRNAs. In Alcanivorax borkumensis (strain ATCC 700651 / DSM 11573 / NCIMB 13689 / SK2), this protein is RNA-binding protein Hfq.